A 302-amino-acid chain; its full sequence is Protein FdhE homolog (302 aa).

Belongs to the FdhE family.

The protein localises to the cytoplasm. Its function is as follows. Necessary for formate dehydrogenase activity. The protein is Protein FdhE homolog of Shewanella oneidensis (strain ATCC 700550 / JCM 31522 / CIP 106686 / LMG 19005 / NCIMB 14063 / MR-1).